Consider the following 141-residue polypeptide: D-aminoacyl-tRNA deacylase (141 aa).

Positions 133–134 match the Gly-cisPro motif, important for rejection of L-amino acids motif; that stretch reads GP.

It belongs to the DTD family. Homodimer.

It localises to the cytoplasm. It catalyses the reaction glycyl-tRNA(Ala) + H2O = tRNA(Ala) + glycine + H(+). It carries out the reaction a D-aminoacyl-tRNA + H2O = a tRNA + a D-alpha-amino acid + H(+). An aminoacyl-tRNA editing enzyme that deacylates mischarged D-aminoacyl-tRNAs. Also deacylates mischarged glycyl-tRNA(Ala), protecting cells against glycine mischarging by AlaRS. Acts via tRNA-based rather than protein-based catalysis; rejects L-amino acids rather than detecting D-amino acids in the active site. By recycling D-aminoacyl-tRNA to D-amino acids and free tRNA molecules, this enzyme counteracts the toxicity associated with the formation of D-aminoacyl-tRNA entities in vivo and helps enforce protein L-homochirality. The polypeptide is D-aminoacyl-tRNA deacylase (Thermobifida fusca (strain YX)).